Consider the following 358-residue polypeptide: Methionine aminopeptidase 2 (358 aa).

A substrate-binding site is contributed by H111. 3 residues coordinate a divalent metal cation: D131, D142, and H211. H219 contributes to the substrate binding site. Positions 244 and 339 each coordinate a divalent metal cation.

This sequence belongs to the peptidase M24A family. Methionine aminopeptidase eukaryotic type 2 subfamily. The cofactor is Co(2+). Zn(2+) is required as a cofactor. Mn(2+) serves as cofactor. Requires Fe(2+) as cofactor.

The protein localises to the cytoplasm. It carries out the reaction Release of N-terminal amino acids, preferentially methionine, from peptides and arylamides.. In terms of biological role, cotranslationally removes the N-terminal methionine from nascent proteins. The N-terminal methionine is often cleaved when the second residue in the primary sequence is small and uncharged (Met-Ala-, Cys, Gly, Pro, Ser, Thr, or Val). The protein is Methionine aminopeptidase 2 of Laccaria bicolor (strain S238N-H82 / ATCC MYA-4686) (Bicoloured deceiver).